Consider the following 141-residue polypeptide: Nucleoside diphosphate kinase (141 aa).

Positions 11, 59, 87, 93, 104, and 114 each coordinate ATP. Histidine 117 (pros-phosphohistidine intermediate) is an active-site residue.

This sequence belongs to the NDK family. As to quaternary structure, homotetramer. Mg(2+) is required as a cofactor.

The protein localises to the cytoplasm. The catalysed reaction is a 2'-deoxyribonucleoside 5'-diphosphate + ATP = a 2'-deoxyribonucleoside 5'-triphosphate + ADP. The enzyme catalyses a ribonucleoside 5'-diphosphate + ATP = a ribonucleoside 5'-triphosphate + ADP. Functionally, major role in the synthesis of nucleoside triphosphates other than ATP. The ATP gamma phosphate is transferred to the NDP beta phosphate via a ping-pong mechanism, using a phosphorylated active-site intermediate. This Methylibium petroleiphilum (strain ATCC BAA-1232 / LMG 22953 / PM1) protein is Nucleoside diphosphate kinase.